A 435-amino-acid polypeptide reads, in one-letter code: Proline--tRNA ligase (435 aa).

This sequence belongs to the class-II aminoacyl-tRNA synthetase family. ProS type 2 subfamily. In terms of assembly, homodimer.

The protein localises to the cytoplasm. It catalyses the reaction tRNA(Pro) + L-proline + ATP = L-prolyl-tRNA(Pro) + AMP + diphosphate. Functionally, catalyzes the attachment of proline to tRNA(Pro) in a two-step reaction: proline is first activated by ATP to form Pro-AMP and then transferred to the acceptor end of tRNA(Pro). This is Proline--tRNA ligase from Rhodospirillum rubrum (strain ATCC 11170 / ATH 1.1.1 / DSM 467 / LMG 4362 / NCIMB 8255 / S1).